A 156-amino-acid polypeptide reads, in one-letter code: Transcriptional repressor NrdR (156 aa).

The segment at 3-34 is a zinc-finger region; the sequence is CPYCGHLDNKVIDSRINKDATITRRRRSCLAC. Positions 49–139 constitute an ATP-cone domain; that stretch reads PMLVKKDGRR…VYRQFKDVDE (91 aa).

This sequence belongs to the NrdR family. Zn(2+) is required as a cofactor.

Its function is as follows. Negatively regulates transcription of bacterial ribonucleotide reductase nrd genes and operons by binding to NrdR-boxes. The sequence is that of Transcriptional repressor NrdR from Desulfotalea psychrophila (strain LSv54 / DSM 12343).